The primary structure comprises 204 residues: MIAQIRGKLILKTVSMVIIDNHGIGYEVMIPLSTYYELPDVGSEVSLFVYTFFKQDSILLVGFCTENEKQLFKLMISVSGIGPRLAVNVLSGINSSELIHAIANNDLNRLLKVPGLGRKMAQRVILELRDKVSGWTSKEQITFINNKKDAIDQSVMEEDAISALINLGYKSQAAKDAIDRVISEGGENKSLDVILKKALKVLAM.

Residues 1 to 64 form a domain I region; that stretch reads MIAQIRGKLI…QDSILLVGFC (64 aa). The segment at 65-143 is domain II; sequence TENEKQLFKL…GWTSKEQITF (79 aa). The segment at 144–154 is flexible linker; it reads INNKKDAIDQS. Residues 154–204 are domain III; sequence SVMEEDAISALINLGYKSQAAKDAIDRVISEGGENKSLDVILKKALKVLAM.

Belongs to the RuvA family. In terms of assembly, homotetramer. Forms an RuvA(8)-RuvB(12)-Holliday junction (HJ) complex. HJ DNA is sandwiched between 2 RuvA tetramers; dsDNA enters through RuvA and exits via RuvB. An RuvB hexamer assembles on each DNA strand where it exits the tetramer. Each RuvB hexamer is contacted by two RuvA subunits (via domain III) on 2 adjacent RuvB subunits; this complex drives branch migration. In the full resolvosome a probable DNA-RuvA(4)-RuvB(12)-RuvC(2) complex forms which resolves the HJ.

It is found in the cytoplasm. The RuvA-RuvB-RuvC complex processes Holliday junction (HJ) DNA during genetic recombination and DNA repair, while the RuvA-RuvB complex plays an important role in the rescue of blocked DNA replication forks via replication fork reversal (RFR). RuvA specifically binds to HJ cruciform DNA, conferring on it an open structure. The RuvB hexamer acts as an ATP-dependent pump, pulling dsDNA into and through the RuvAB complex. HJ branch migration allows RuvC to scan DNA until it finds its consensus sequence, where it cleaves and resolves the cruciform DNA. The chain is Holliday junction branch migration complex subunit RuvA from Syntrophus aciditrophicus (strain SB).